A 624-amino-acid chain; its full sequence is Actin-related protein 8 (624 aa).

M1 carries the post-translational modification N-acetylmethionine. A compositionally biased stretch (basic and acidic residues) spans M1 to G25. Residues M1–P29 are disordered. Residues S55 and T56 each contribute to the ATP site. Phosphoserine is present on S132. D283 to D286 provides a ligand contact to ATP. S412 is modified (phosphoserine). Positions S430–L462 are disordered.

It belongs to the actin family. ARP8 subfamily. In terms of assembly, component of the chromatin remodeling INO80 complex; specifically part of a complex module associated with the DBINO domain of INO80. Exists as monomers and dimers, but the dimer is most probably the biologically relevant form required for stable interactions with histones that exploits the twofold symmetry of the nucleosome core.

Its subcellular location is the nucleus. The protein localises to the chromosome. Its function is as follows. Plays an important role in the functional organization of mitotic chromosomes. Exhibits low basal ATPase activity, and unable to polymerize. Proposed core component of the chromatin remodeling INO80 complex which is involved in transcriptional regulation, DNA replication and probably DNA repair. Required for the recruitment of INO80 (and probably the INO80 complex) to sites of DNA damage Strongly prefer nucleosomes and H3-H4 tetramers over H2A-H2B dimers, suggesting it may act as a nucleosome recognition module within the complex. This Pongo abelii (Sumatran orangutan) protein is Actin-related protein 8 (ACTR8).